Here is a 373-residue protein sequence, read N- to C-terminus: MHNQAPIQRRKSKRIYVGNVPIGDGAPIAVQSMTNTRTTDVAATVSQIKALERVGADIVRVSVPTMDAAEAFKLIKQQVNVPLVADIHFDYRIALKVAEYGVDCLRINPGNIGNEERIRTVVDCARDKNIPIRIGVNAGSLEKDLQEKYGEPTPQALLESAMRHVDHLDRLNFDQFKVSVKASDVFLAVESYRLLAKQIDQPLHLGITEAGGARSGAVKSAIGLGLLLSEGIGDTLRVSLAADPVEEIKVGFDILKSLRIRARGINFIACPTCSRQEFDVIGTVNALEQRLEDIITPMDVSIIGCVVNGPGEALVSTLGVTGGNKKSGLYEDGVRKDRLDNDDMIDQLEARIRAKASMLDEARRIDVQQLEAK.

The [4Fe-4S] cluster site is built by C270, C273, C305, and E312.

It belongs to the IspG family. [4Fe-4S] cluster is required as a cofactor.

The enzyme catalyses (2E)-4-hydroxy-3-methylbut-2-enyl diphosphate + oxidized [flavodoxin] + H2O + 2 H(+) = 2-C-methyl-D-erythritol 2,4-cyclic diphosphate + reduced [flavodoxin]. The protein operates within isoprenoid biosynthesis; isopentenyl diphosphate biosynthesis via DXP pathway; isopentenyl diphosphate from 1-deoxy-D-xylulose 5-phosphate: step 5/6. Its function is as follows. Converts 2C-methyl-D-erythritol 2,4-cyclodiphosphate (ME-2,4cPP) into 1-hydroxy-2-methyl-2-(E)-butenyl 4-diphosphate. This is 4-hydroxy-3-methylbut-2-en-1-yl diphosphate synthase (flavodoxin) from Klebsiella pneumoniae (strain 342).